The chain runs to 219 residues: Elongation factor Ts (219 aa).

The segment at 82-85 is involved in Mg(2+) ion dislocation from EF-Tu; it reads TDFV.

The protein belongs to the EF-Ts family.

It is found in the cytoplasm. In terms of biological role, associates with the EF-Tu.GDP complex and induces the exchange of GDP to GTP. It remains bound to the aminoacyl-tRNA.EF-Tu.GTP complex up to the GTP hydrolysis stage on the ribosome. The protein is Elongation factor Ts of Trichodesmium erythraeum (strain IMS101).